Reading from the N-terminus, the 487-residue chain is GTPase Der (487 aa).

EngA-type G domains follow at residues 3-167 and 203-378; these read FTLA…EGFA and LQIA…DIWN. Residues 9-16, 56-60, 119-122, 209-216, 256-260, and 321-324 contribute to the GTP site; these read GRPNVGKS, DTAGL, NKAE, GRPNAGKS, DTAGM, and NKWD. The 85-residue stretch at 379-463 folds into the KH-like domain; sequence RRITTARLNT…PIRLTMRGQG (85 aa). The segment at 451–487 is disordered; that stretch reads PGTPIRLTMRGQGDKNPFKERKFRTPSRLRKHLGKKD. Basic residues predominate over residues 471–487; that stretch reads RKFRTPSRLRKHLGKKD.

Belongs to the TRAFAC class TrmE-Era-EngA-EngB-Septin-like GTPase superfamily. EngA (Der) GTPase family. As to quaternary structure, associates with the 50S ribosomal subunit.

Functionally, GTPase that plays an essential role in the late steps of ribosome biogenesis. The chain is GTPase Der from Cereibacter sphaeroides (strain ATCC 17029 / ATH 2.4.9) (Rhodobacter sphaeroides).